A 359-amino-acid chain; its full sequence is Phospho-N-acetylmuramoyl-pentapeptide-transferase (359 aa).

The next 10 helical transmembrane spans lie at 23–43, 68–88, 92–112, 126–146, 165–185, 198–218, 235–255, 262–282, 287–307, and 336–356; these read VAFF…IKWA, MGGI…GNLF, VLLG…DDYM, MKFF…LYIG, AFKI…VFLA, GLAT…VYVA, SGEL…FLWY, VFMG…MAIV, ILLL…ILQV, and KIIV…LLSL.

Belongs to the glycosyltransferase 4 family. MraY subfamily. Mg(2+) is required as a cofactor.

It localises to the cell inner membrane. It carries out the reaction UDP-N-acetyl-alpha-D-muramoyl-L-alanyl-gamma-D-glutamyl-meso-2,6-diaminopimeloyl-D-alanyl-D-alanine + di-trans,octa-cis-undecaprenyl phosphate = di-trans,octa-cis-undecaprenyl diphospho-N-acetyl-alpha-D-muramoyl-L-alanyl-D-glutamyl-meso-2,6-diaminopimeloyl-D-alanyl-D-alanine + UMP. Its pathway is cell wall biogenesis; peptidoglycan biosynthesis. In terms of biological role, catalyzes the initial step of the lipid cycle reactions in the biosynthesis of the cell wall peptidoglycan: transfers peptidoglycan precursor phospho-MurNAc-pentapeptide from UDP-MurNAc-pentapeptide onto the lipid carrier undecaprenyl phosphate, yielding undecaprenyl-pyrophosphoryl-MurNAc-pentapeptide, known as lipid I. In Helicobacter hepaticus (strain ATCC 51449 / 3B1), this protein is Phospho-N-acetylmuramoyl-pentapeptide-transferase.